Here is a 136-residue protein sequence, read N- to C-terminus: Nucleoside diphosphate kinase (136 aa).

Residues Lys-10, Phe-58, Arg-86, Thr-92, Arg-104, and Asn-114 each contribute to the ATP site. His-117 functions as the Pros-phosphohistidine intermediate in the catalytic mechanism.

The protein belongs to the NDK family. As to quaternary structure, homotetramer. It depends on Mg(2+) as a cofactor.

It is found in the cytoplasm. The catalysed reaction is a 2'-deoxyribonucleoside 5'-diphosphate + ATP = a 2'-deoxyribonucleoside 5'-triphosphate + ADP. The enzyme catalyses a ribonucleoside 5'-diphosphate + ATP = a ribonucleoside 5'-triphosphate + ADP. Its function is as follows. Major role in the synthesis of nucleoside triphosphates other than ATP. The ATP gamma phosphate is transferred to the NDP beta phosphate via a ping-pong mechanism, using a phosphorylated active-site intermediate. This Corynebacterium jeikeium (strain K411) protein is Nucleoside diphosphate kinase.